Consider the following 274-residue polypeptide: Glutamate racemase (274 aa).

Residues 9 to 10 (DS) and 41 to 42 (YG) contribute to the substrate site. The active-site Proton donor/acceptor is Cys-73. Residue 74 to 75 (NT) coordinates substrate. Cys-183 (proton donor/acceptor) is an active-site residue. A substrate-binding site is contributed by 184–185 (TH).

It belongs to the aspartate/glutamate racemases family.

It carries out the reaction L-glutamate = D-glutamate. The protein operates within cell wall biogenesis; peptidoglycan biosynthesis. In terms of biological role, provides the (R)-glutamate required for cell wall biosynthesis. The sequence is that of Glutamate racemase from Shewanella baltica (strain OS223).